Reading from the N-terminus, the 221-residue chain is Histone H1.3 (221 aa).

Positions 1–17 are enriched in low complexity; that stretch reads MSETAPAAPAAPAPVEK. Positions 1–42 are disordered; sequence MSETAPAAPAAPAPVEKTPVKKKAKKTGAAAGKRKASGPPVS. N-acetylserine is present on S2. At S2 the chain carries Phosphoserine. N6-acetyllysine is present on K17. T18 is subject to Phosphothreonine. Basic residues predominate over residues 20-36; the sequence is VKKKAKKTGAAAGKRKA. K33, K35, and K53 each carry N6-(beta-hydroxybutyryl)lysine. In terms of domain architecture, H15 spans 37–110; it reads SGPPVSELIT…GASGSFKLNK (74 aa). R55 is subject to Citrulline. Residues K65, K86, and K91 each carry the N6-(beta-hydroxybutyryl)lysine modification. The disordered stretch occupies residues 92–221; sequence GTLVQTKGTG…KAKKAAPRKK (130 aa). S105 bears the Phosphoserine; by PKC mark. Residues K107 and K141 each carry the N6-(beta-hydroxybutyryl)lysine modification. Composition is skewed to basic residues over residues 120 to 141, 150 to 161, 170 to 187, and 194 to 221; these read KAKK…KPKK, KTAKKTPKKAKK, KVSK…KKAA, and KAPK…PRKK.

Belongs to the histone H1/H5 family. Post-translationally, H1 histones are progressively phosphorylated during the cell cycle, becoming maximally phosphorylated during late G2 phase and M phase, and being dephosphorylated sharply thereafter. In terms of processing, hydroxybutyrylation of histones is induced by starvation. Citrullination at Arg-55 (H1R54ci) by PADI4 takes place within the DNA-binding site of H1 and results in its displacement from chromatin and global chromatin decondensation, thereby promoting pluripotency and stem cell maintenance.

It is found in the nucleus. The protein resides in the chromosome. Histone H1 protein binds to linker DNA between nucleosomes forming the macromolecular structure known as the chromatin fiber. Histones H1 are necessary for the condensation of nucleosome chains into higher-order structured fibers. Also acts as a regulator of individual gene transcription through chromatin remodeling, nucleosome spacing and DNA methylation. This Mus musculus (Mouse) protein is Histone H1.3.